The primary structure comprises 389 residues: Cytochrome b (389 aa).

4 consecutive transmembrane segments (helical) span residues 32–52 (FGSL…FLAM), 76–98 (YILR…VHIG), 113–133 (LWSI…LGYV), and 179–199 (FFSL…AHMI). 2 residues coordinate heme b: H82 and H96. H183 and H197 together coordinate heme b. An a ubiquinone-binding site is contributed by H202. 4 helical membrane passes run 225–245 (FIFK…IIVF), 289–309 (LLGV…PFVD), 322–342 (INMV…LVGA), and 349–369 (FIFL…VIVP).

It belongs to the cytochrome b family. Fungal cytochrome b-c1 complex contains 10 subunits; 3 respiratory subunits, 2 core proteins and 5 low-molecular weight proteins. Cytochrome b-c1 complex is a homodimer. Heme b serves as cofactor.

It is found in the mitochondrion inner membrane. Component of the ubiquinol-cytochrome c reductase complex (complex III or cytochrome b-c1 complex) that is part of the mitochondrial respiratory chain. The b-c1 complex mediates electron transfer from ubiquinol to cytochrome c. Contributes to the generation of a proton gradient across the mitochondrial membrane that is then used for ATP synthesis. This chain is Cytochrome b (COB), found in Mycena viridimarginata.